Reading from the N-terminus, the 195-residue chain is Large ribosomal subunit protein bL32m (195 aa).

Residues C95, C98, C108, and C111 each coordinate Zn(2+).

This sequence belongs to the bacterial ribosomal protein bL32 family. In terms of assembly, component of the mitochondrial large ribosomal subunit (mt-LSU).

The protein localises to the mitochondrion. Functionally, component of the mitochondrial large ribosomal subunit (mt-LSU). The mitochondrial ribosome (mitoribosome) is a large ribonucleoprotein complex responsible for the synthesis of proteins inside mitochondria. The protein is Large ribosomal subunit protein bL32m (mRpL32) of Drosophila melanogaster (Fruit fly).